A 621-amino-acid polypeptide reads, in one-letter code: MSNQEYTFQTEINQLLDLMIHSMYSNKEIFLRELISNASDALDKLNYLMLTDEKLKGLKITPSIHLSFDSQKKTLTIKDNGIGMDKNDLIEHLGTIAKSGTKSFLSALSGDKKKDSALIGQFGVGFYSAFMVAGKIVVQTKKVTSEQAYAWVSDGKGKFEINECIKDEQGTEITLFLKDEDANFASRWEIDSIVKKYSEHIPFPIFLTYTDTKMEGEGDHKKEVKEEKCEQINQASALWKMNKSELKDKDYKEFYKSFAHDNSEPLSYIHNKVEGSLEYTTLFYIPSVAPFDMFRVDYKSGVKLYVKRVFITDDDKELLPSYLRFIKGVIDSEDLPLNVSREILQQNKILANIRSASVKKILGEIEKLSKDNENYHKFYEPFGKVLKEGLYGDFENKEKLLELLRFYSKDKEKLISLKEYKENLKENQKSIYYLLGENLDLLKASPILEKYAQKGYDVLLLSDEIDAFVMPSVNEYDKMPFRDASHSESLKELGLEEINDEVKNQFKDLIKAFEENLKDEIKGVELSSHLTSAVALIGDEQNAMMANLMRQMGQNMPESKKTLELNPNHAILQKLLKCEDKEQMSAFIWLLYDGAKLLEKGALKDAKSFNERLNSVLLKAL.

Residues 1–341 form an a; substrate-binding region; the sequence is MSNQEYTFQT…SEDLPLNVSR (341 aa). Residues 342–547 are b; the sequence is EILQQNKILA…GDEQNAMMAN (206 aa). The segment at 548 to 621 is c; the sequence is LMRQMGQNMP…RLNSVLLKAL (74 aa).

Belongs to the heat shock protein 90 family. Homodimer.

It localises to the cytoplasm. In terms of biological role, molecular chaperone. Has ATPase activity. This is Chaperone protein HtpG from Helicobacter acinonychis (strain Sheeba).